Here is a 259-residue protein sequence, read N- to C-terminus: Undecaprenyl-diphosphatase 3 (259 aa).

The next 8 helical transmembrane spans lie at 1-21 (MNWLEAFILGIIQGLTEFLPI), 39-59 (AGLFLDTMLHIGTLLAVFIYY), 71-91 (FSKLMLLLIVGTIPAVVIGLL), 99-119 (ISKTGITIGWEFLVSGFFLYM), 133-153 (ITYKDALIIGSFQAAAIFPAI), 174-194 (AYFSFLLSTPAIVGAIILQFV), 208-228 (SLIVGTLSAAFFGYIAVSWMI), and 239-259 (FAYYVWGLGILILMLQFTDVF).

The protein belongs to the UppP family.

The protein localises to the cell membrane. The catalysed reaction is di-trans,octa-cis-undecaprenyl diphosphate + H2O = di-trans,octa-cis-undecaprenyl phosphate + phosphate + H(+). Its function is as follows. Catalyzes the dephosphorylation of undecaprenyl diphosphate (UPP). Confers resistance to bacitracin. The chain is Undecaprenyl-diphosphatase 3 from Bacillus cereus (strain ATCC 14579 / DSM 31 / CCUG 7414 / JCM 2152 / NBRC 15305 / NCIMB 9373 / NCTC 2599 / NRRL B-3711).